The primary structure comprises 435 residues: Glutamate-1-semialdehyde 2,1-aminomutase (435 aa).

Lys-266 is modified (N6-(pyridoxal phosphate)lysine).

The protein belongs to the class-III pyridoxal-phosphate-dependent aminotransferase family. HemL subfamily. As to quaternary structure, homodimer. The cofactor is pyridoxal 5'-phosphate.

The protein localises to the cytoplasm. It catalyses the reaction (S)-4-amino-5-oxopentanoate = 5-aminolevulinate. It participates in porphyrin-containing compound metabolism; protoporphyrin-IX biosynthesis; 5-aminolevulinate from L-glutamyl-tRNA(Glu): step 2/2. This is Glutamate-1-semialdehyde 2,1-aminomutase from Nitrosomonas europaea (strain ATCC 19718 / CIP 103999 / KCTC 2705 / NBRC 14298).